We begin with the raw amino-acid sequence, 844 residues long: Putative ubiquitin thioesterase 232R (844 aa).

Disordered stretches follow at residues 136–223, 261–287, 326–377, and 422–541; these read NSST…DEAE, SRRK…PPME, LLNG…PELT, and QKKQ…KLSV. Low complexity predominate over residues 137 to 216; the sequence is SSTRSRSPSV…PSRQSVRQSS (80 aa). Composition is skewed to low complexity over residues 332 to 341 and 354 to 364; these read RPSPSLPQSR and RSPSVGSPSVR. A compositionally biased stretch (pro residues) spans 429-438; the sequence is SPSPTPPSPV. Basic and acidic residues predominate over residues 472–485; that stretch reads VQKKMGKSGEREPK. The span at 504 to 518 shows a compositional bias: low complexity; the sequence is SLRSRLSTQQQTQQS. The span at 526–535 shows a compositional bias: basic and acidic residues; that stretch reads ESIKPEESVR. In terms of domain architecture, OTU spans 590–725; it reads YTVKQVSGDG…NYHYTSLVPI (136 aa). Asp598 is an active-site residue. The active-site Nucleophile is Cys601. His718 is an active-site residue.

It catalyses the reaction Thiol-dependent hydrolysis of ester, thioester, amide, peptide and isopeptide bonds formed by the C-terminal Gly of ubiquitin (a 76-residue protein attached to proteins as an intracellular targeting signal).. Functionally, hydrolase that can remove conjugated ubiquitin from proteins and may therefore play an important regulatory role at the level of protein turnover by preventing degradation. The polypeptide is Putative ubiquitin thioesterase 232R (Aedes vexans (Inland floodwater mosquito)).